We begin with the raw amino-acid sequence, 549 residues long: Oxygen-dependent choline dehydrogenase (549 aa).

4-33 (DFVIIGSGSAGSALAYRLSEDGKNSVLVIE) is an FAD binding site. H465 serves as the catalytic Proton acceptor.

Belongs to the GMC oxidoreductase family. FAD is required as a cofactor.

It carries out the reaction choline + A = betaine aldehyde + AH2. It catalyses the reaction betaine aldehyde + NAD(+) + H2O = glycine betaine + NADH + 2 H(+). It participates in amine and polyamine biosynthesis; betaine biosynthesis via choline pathway; betaine aldehyde from choline (cytochrome c reductase route): step 1/1. Involved in the biosynthesis of the osmoprotectant glycine betaine. Catalyzes the oxidation of choline to betaine aldehyde and betaine aldehyde to glycine betaine at the same rate. The sequence is that of Oxygen-dependent choline dehydrogenase from Rhizobium etli (strain CIAT 652).